We begin with the raw amino-acid sequence, 180 residues long: Large ribosomal subunit protein uL5 (180 aa).

This sequence belongs to the universal ribosomal protein uL5 family. As to quaternary structure, part of the 50S ribosomal subunit; part of the 5S rRNA/L5/L18/L25 subcomplex. Contacts the 5S rRNA and the P site tRNA. Forms a bridge to the 30S subunit in the 70S ribosome.

This is one of the proteins that bind and probably mediate the attachment of the 5S RNA into the large ribosomal subunit, where it forms part of the central protuberance. In the 70S ribosome it contacts protein S13 of the 30S subunit (bridge B1b), connecting the 2 subunits; this bridge is implicated in subunit movement. Contacts the P site tRNA; the 5S rRNA and some of its associated proteins might help stabilize positioning of ribosome-bound tRNAs. This is Large ribosomal subunit protein uL5 from Clostridium botulinum (strain ATCC 19397 / Type A).